The chain runs to 376 residues: GTPase Obg (376 aa).

The region spanning 1–158 is the Obg domain; sequence MFIDSVNLTL…RDVRLELKLI (158 aa). The region spanning 159–359 is the OBG-type G domain; sequence ADVGLVGFPN…LKFSLLELLK (201 aa). GTP-binding positions include 165-172, 190-194, 212-215, 280-283, and 340-342; these read GFPNVGKS, FTTLT, DIPG, TRMD, and SSA. Mg(2+)-binding residues include S172 and T192.

This sequence belongs to the TRAFAC class OBG-HflX-like GTPase superfamily. OBG GTPase family. As to quaternary structure, monomer. Requires Mg(2+) as cofactor.

The protein resides in the cytoplasm. An essential GTPase which binds GTP, GDP and possibly (p)ppGpp with moderate affinity, with high nucleotide exchange rates and a fairly low GTP hydrolysis rate. Plays a role in control of the cell cycle, stress response, ribosome biogenesis and in those bacteria that undergo differentiation, in morphogenesis control. In Campylobacter curvus (strain 525.92), this protein is GTPase Obg.